The sequence spans 98 residues: NADH-ubiquinone oxidoreductase chain 4L (98 aa).

Helical transmembrane passes span 1 to 21 (MSMV…GLLV), 30 to 50 (LLCL…TILI), and 61 to 81 (IILL…LVMV).

The protein belongs to the complex I subunit 4L family. Core subunit of respiratory chain NADH dehydrogenase (Complex I) which is composed of 45 different subunits.

It localises to the mitochondrion inner membrane. It catalyses the reaction a ubiquinone + NADH + 5 H(+)(in) = a ubiquinol + NAD(+) + 4 H(+)(out). In terms of biological role, core subunit of the mitochondrial membrane respiratory chain NADH dehydrogenase (Complex I) which catalyzes electron transfer from NADH through the respiratory chain, using ubiquinone as an electron acceptor. Part of the enzyme membrane arm which is embedded in the lipid bilayer and involved in proton translocation. This chain is NADH-ubiquinone oxidoreductase chain 4L (MT-ND4L), found in Pagophilus groenlandicus (Harp seal).